Here is a 159-residue protein sequence, read N- to C-terminus: Globin CTT-W (159 aa).

Positions Met1–Ala16 are cleaved as a signal peptide. The Globin domain occupies His17–Glu159. 2 residues coordinate heme b: His73 and His108.

This sequence belongs to the globin family.

The protein is Globin CTT-W (CTT-W) of Chironomus thummi thummi (Midge).